The sequence spans 220 residues: Iron-sulfur cluster repair protein YtfE (220 aa).

It belongs to the RIC family. YtfE subfamily. As to quaternary structure, homodimer.

It localises to the cytoplasm. Functionally, di-iron-containing protein involved in the repair of iron-sulfur clusters damaged by oxidative and nitrosative stress conditions. The sequence is that of Iron-sulfur cluster repair protein YtfE from Escherichia coli O8 (strain IAI1).